A 210-amino-acid chain; its full sequence is MSNQFNTRKRLMAMLANEMRLEQEENAIAKQSAKFHSKFATTMENIKRQQHESKKLNTLLNQRRDEVEKRNALKNAVRDKLAEEEQHCAEMQAQLGKKKQERDKLIACAHILSEAANTYINRKALPERVKGVAVSPDNGQWIPFDFNAHDRQGLAALWTQVNRSSRNINKWRQLSSVGNSSMPAPSGKENANVSMTSVIEIDLTSPPSQK.

The stretch at 42–106 forms a coiled coil; it reads TMENIKRQQH…KKKQERDKLI (65 aa).

This sequence belongs to the SPC25 family. In terms of assembly, component of the Ndc80 complex, which is composed of Ndc80, Nuf2 and Spc25.

It localises to the nucleus. The protein localises to the chromosome. It is found in the centromere. The protein resides in the kinetochore. Functionally, acts as a component of the essential kinetochore-associated Ndc80 complex, which is required for chromosome segregation and spindle checkpoint activity during meiosis and mitosis. Required for kinetochore integrity and the organization of stable microtubule binding sites in the outer plate of the kinetochore. Participates in SAC signaling that responds specifically to disruptions in spindle microtubule dynamics. The NDC80 complex synergistically enhances the affinity of the SKA1 complex for microtubules and may allow the NDC80 complex to track depolymerizing microtubules. The protein is Kinetochore protein Spc25 of Drosophila virilis (Fruit fly).